The chain runs to 168 residues: Phosphopantetheine adenylyltransferase (168 aa).

Substrate is bound at residue T14. ATP-binding positions include 14–15 (TF) and H22. Positions 46, 78, and 92 each coordinate substrate. Residues 93–95 (GLR), E103, and 128–134 (YSFISSS) contribute to the ATP site.

It belongs to the bacterial CoaD family. Homohexamer. Mg(2+) serves as cofactor.

The protein resides in the cytoplasm. It carries out the reaction (R)-4'-phosphopantetheine + ATP + H(+) = 3'-dephospho-CoA + diphosphate. The protein operates within cofactor biosynthesis; coenzyme A biosynthesis; CoA from (R)-pantothenate: step 4/5. Its function is as follows. Reversibly transfers an adenylyl group from ATP to 4'-phosphopantetheine, yielding dephospho-CoA (dPCoA) and pyrophosphate. This is Phosphopantetheine adenylyltransferase from Xanthomonas campestris pv. campestris (strain B100).